The chain runs to 194 residues: Peptidyl-tRNA hydrolase (194 aa).

Tyr17 lines the tRNA pocket. His22 (proton acceptor) is an active-site residue. TRNA contacts are provided by Tyr68, Asn70, and Asn116.

It belongs to the PTH family. In terms of assembly, monomer.

The protein localises to the cytoplasm. It catalyses the reaction an N-acyl-L-alpha-aminoacyl-tRNA + H2O = an N-acyl-L-amino acid + a tRNA + H(+). In terms of biological role, hydrolyzes ribosome-free peptidyl-tRNAs (with 1 or more amino acids incorporated), which drop off the ribosome during protein synthesis, or as a result of ribosome stalling. Catalyzes the release of premature peptidyl moieties from peptidyl-tRNA molecules trapped in stalled 50S ribosomal subunits, and thus maintains levels of free tRNAs and 50S ribosomes. The sequence is that of Peptidyl-tRNA hydrolase from Pseudomonas putida (strain GB-1).